The sequence spans 158 residues: Small ribosomal subunit protein uS7 (158 aa).

Belongs to the universal ribosomal protein uS7 family. As to quaternary structure, part of the 30S ribosomal subunit. Contacts proteins S9 and S11.

One of the primary rRNA binding proteins, it binds directly to 16S rRNA where it nucleates assembly of the head domain of the 30S subunit. Is located at the subunit interface close to the decoding center, probably blocks exit of the E-site tRNA. The protein is Small ribosomal subunit protein uS7 of Gluconacetobacter diazotrophicus (strain ATCC 49037 / DSM 5601 / CCUG 37298 / CIP 103539 / LMG 7603 / PAl5).